The chain runs to 320 residues: Solute carrier family 35 member B1 (320 aa).

Helical transmembrane passes span 9–29, 49–69, 81–103, 134–154, 166–186, 202–222, 241–261, and 283–303; these read GLRLLVCFLGVFVCYFYYGIL, FALSLVFVQCIVNALFAKLLI, QSWLYSACSLSYLGAMVSSNSAL, YPLTKYLCVLLIVFGVALFMY, TVGYGELLLLLSLTLDGLTGV, MMLSINLWSSLFLGAGIVLTG, IVLFSLTSALGQTFIFMTVVY, and VILFSNPISSIQWVGTLLVFL. Residues 316–320 carry the Di-lysine motif motif; it reads KKPSH.

This sequence belongs to the nucleotide-sugar transporter family. SLC35B subfamily.

The protein localises to the endoplasmic reticulum membrane. In terms of biological role, probable sugar transporter. The polypeptide is Solute carrier family 35 member B1 (slc35b1) (Xenopus laevis (African clawed frog)).